We begin with the raw amino-acid sequence, 492 residues long: KAT8 regulatory NSL complex subunit 2 (492 aa).

Lysine 78 participates in a covalent cross-link: Glycyl lysine isopeptide (Lys-Gly) (interchain with G-Cter in SUMO2). Residues 126 to 182 (ELGSQTPESSRSEASRILDEDSWSDGEQEPITVDQTWRGDPDSEADSIDSDQEDPLK) are disordered. Threonine 131 carries the phosphothreonine modification. The span at 135-144 (SRSEASRILD) shows a compositional bias: basic and acidic residues. 5 positions are modified to phosphoserine: serine 147, serine 149, serine 168, serine 172, and serine 175. Positions 167–178 (DSEADSIDSDQE) are enriched in acidic residues. The segment at 308-364 (DVRCSNQSLPMTRHCLTHICQDTNQVLFKCCQGSEEVPCNKPVPVSLSEDPCCPLHF) is required for interaction with other NSL complex members. Residues 455 to 492 (AGDGCRSQGSRNSEKASAPLSQSGLATANGKPEPTSIS) form a disordered region.

Component of the NSL complex at least composed of KAT8/MOF, KANSL1, KANSL2, KANSL3, MCRS1, PHF20, OGT1/OGT, WDR5 and HCFC1.

It localises to the nucleus. The protein resides in the mitochondrion. Non-catalytic component of the NSL histone acetyltransferase complex, a multiprotein complex that mediates histone H4 acetylation at 'Lys-5'- and 'Lys-8' (H4K5ac and H4K8ac) at transcription start sites and promotes transcription initiation. Required for NSL complex stability and for transcription of intraciliary transport genes in both ciliated and non-ciliated cells by regulating histone H4 acetylation at 'Lys-5'- and 'Lys-12' (H4K5ac and H4K12ac). This is necessary for cilium assembly in ciliated cells and for organization of the microtubule cytoskeleton in non-ciliated cells. Required within the NSL complex to maintain nuclear architecture stability by promoting KAT8-mediated acetylation of lamin LMNA. The sequence is that of KAT8 regulatory NSL complex subunit 2 (KANSL2) from Homo sapiens (Human).